A 477-amino-acid polypeptide reads, in one-letter code: C4-dicarboxylate transport protein 1 (477 aa).

8 helical membrane-spanning segments follow: residues 21–39 (PYVQ…GHFY), 59–76 (MIIA…IAGM), 89–111 (AMVY…GNVI), 162–179 (ILQV…LAMV), 200–221 (LVGI…FTIG), 231–253 (LAML…LGAV), 342–364 (VLLL…AGFV), and 368–387 (ATLS…ILGV). Residues 435–477 (SAGQPLITPAPSNSAASLPVESPGWSQTPDDRAAGSKQTLAGR) are disordered.

The protein belongs to the dicarboxylate/amino acid:cation symporter (DAACS) (TC 2.A.23) family.

Its subcellular location is the cell inner membrane. Its function is as follows. Responsible for the transport of dicarboxylates such as succinate, fumarate, and malate from the periplasm across the membrane. This transport system plays an important role in the energy supply of rhizobium-legume symbionts. This is C4-dicarboxylate transport protein 1 (dctA1) from Mesorhizobium japonicum (strain LMG 29417 / CECT 9101 / MAFF 303099) (Mesorhizobium loti (strain MAFF 303099)).